Here is a 171-residue protein sequence, read N- to C-terminus: UPF0312 protein SAV2687 (171 aa).

It belongs to the UPF0312 family.

The chain is UPF0312 protein SAV2687 from Staphylococcus aureus (strain Mu50 / ATCC 700699).